A 74-amino-acid chain; its full sequence is Probable tetrachloroethene reductive dehalogenase membrane anchor protein (74 aa).

The next 2 helical transmembrane spans lie at 11–31 and 40–60; these read ALGLSLLYLALILVTFQISMG and AGSILMVAGLIFSIIGVFLLM.

Belongs to the PceB family.

It localises to the cell inner membrane. Functionally, may act as a membrane anchor for the tetrachloroethene reductive dehalogenase PceA. The polypeptide is Probable tetrachloroethene reductive dehalogenase membrane anchor protein (Sulfurospirillum multivorans (Dehalospirillum multivorans)).